The primary structure comprises 308 residues: Probable dimethyladenosine transferase (308 aa).

Residues 1-11 (MGKTSKVKKTK) are compositionally biased toward basic residues. The tract at residues 1–24 (MGKTSKVKKTKAGSSTGNVQSLPF) is disordered. A compositionally biased stretch (polar residues) spans 12 to 24 (AGSSTGNVQSLPF). S-adenosyl-L-methionine-binding residues include His-31, Leu-33, Gly-58, Glu-79, Asp-107, and Asn-122.

This sequence belongs to the class I-like SAM-binding methyltransferase superfamily. rRNA adenine N(6)-methyltransferase family. As to quaternary structure, part of the small subunit (SSU) processome, composed of more than 70 proteins and the RNA chaperone small nucleolar RNA (snoRNA) U3.

The protein localises to the nucleus. Its subcellular location is the nucleolus. It catalyses the reaction adenosine(1779)/adenosine(1780) in 18S rRNA + 4 S-adenosyl-L-methionine = N(6)-dimethyladenosine(1779)/N(6)-dimethyladenosine(1780) in 18S rRNA + 4 S-adenosyl-L-homocysteine + 4 H(+). In terms of biological role, specifically dimethylates two adjacent adenosines in the loop of a conserved hairpin near the 3'-end of 18S rRNA in the 40S particle. Involved in the pre-rRNA processing steps leading to small-subunit rRNA production independently of its RNA-modifying catalytic activity. Part of the small subunit (SSU) processome, first precursor of the small eukaryotic ribosomal subunit. During the assembly of the SSU processome in the nucleolus, many ribosome biogenesis factors, an RNA chaperone and ribosomal proteins associate with the nascent pre-rRNA and work in concert to generate RNA folding, modifications, rearrangements and cleavage as well as targeted degradation of pre-ribosomal RNA by the RNA exosome. In Caenorhabditis elegans, this protein is Probable dimethyladenosine transferase.